A 334-amino-acid chain; its full sequence is D-fructose 1,6-bisphosphatase class 2/sedoheptulose 1,7-bisphosphatase (334 aa).

Residues D33, E57, D85, and E88 each contribute to the Mn(2+) site. Substrate-binding positions include 88 to 90 (EGT), Y119, 164 to 166 (RAR), and 186 to 188 (DGD). Residue E213 coordinates Mn(2+).

The protein belongs to the FBPase class 2 family. As to quaternary structure, homotetramer. Mn(2+) serves as cofactor.

The catalysed reaction is beta-D-fructose 1,6-bisphosphate + H2O = beta-D-fructose 6-phosphate + phosphate. The enzyme catalyses D-sedoheptulose 1,7-bisphosphate + H2O = D-sedoheptulose 7-phosphate + phosphate. Its pathway is carbohydrate biosynthesis; Calvin cycle. Its function is as follows. Catalyzes the hydrolysis of fructose 1,6-bisphosphate (Fru 1,6-P2) and sedoheptulose 1,7-bisphosphate (Sed 1,7-P2) to fructose 6-phosphate and sedoheptulose 7-phosphate, respectively. In Synechococcus sp. (strain CC9605), this protein is D-fructose 1,6-bisphosphatase class 2/sedoheptulose 1,7-bisphosphatase.